The chain runs to 414 residues: eIF5-mimic protein 1 (414 aa).

The tract at residues 1–22 (MNKNQKPVLTGQRFKTRKRDEK) is disordered. Residues 248–414 (VQQSLGTRKE…LQNAEEEFRI (167 aa)) form the W2 domain.

The protein belongs to the BZW family.

The protein localises to the cytoplasm. Functionally, translation initiation regulator which may repress non-AUG initiated translation and repeat-associated non-AUG (RAN) initiated translation by acting as a competitive inhibitor of eukaryotic translation initiation factor 5 (EIF5) function. In Gallus gallus (Chicken), this protein is eIF5-mimic protein 1 (BZW2).